A 454-amino-acid polypeptide reads, in one-letter code: MHGPTSKAISRNVRSVKRPRRAPRPVVSTQAMNKLSNVTLSAEQEKLRERVLSFMRSNLSQYKSDWKHPAMFVIQGDAGTGKSVILNSLFNEIQKLSQFSPSSEDILHGTHNYLVVNHPEMLKLYIRISDSFKYISKSSLERPTSLINNLQKRKVMADVVIVDEAHLLATSKDAFKRFYGENHLKDLMSLCKVLVLVYDDKQALRMGSYWDEGSNNGATLKDFYNEIPPKSRDWYTLKQQFRVAAPQNVLNWIDQISVAGKIPPIESVLSKGNADCADDKIKNFDFKIWDDCGAMYEAIKEKDRQYGQCRMLSTYDFPYRLDGKDYYVECGDNFKVRWDRYTPREVTPWSERCDTIDEVGSVYTIQGFDLNYAGVILGRSIGYDAANDCIKLRPELYDDRAGFTKKKNIHNAEDVKQKIIMNSINVLLTRGVRGLYVYAYDPELRERLLRPSKK.

The disordered stretch occupies residues 1 to 25; it reads MHGPTSKAISRNVRSVKRPRRAPRP. Positions 14–23 are enriched in basic residues; sequence RSVKRPRRAP.

It is found in the cytoplasm. The protein localises to the nucleus. This is an uncharacterized protein from Saccharomyces cerevisiae (strain ATCC 204508 / S288c) (Baker's yeast).